Consider the following 308-residue polypeptide: Uridylate cyclase (308 aa).

Positions 62 and 106 each coordinate Mn(2+).

The protein belongs to the adenylyl cyclase class-4/guanylyl cyclase family. Pyrimidine cyclase subfamily. Homodimer. It depends on Mn(2+) as a cofactor.

It localises to the cytoplasm. The enzyme catalyses GTP = 3',5'-cyclic GMP + diphosphate. It catalyses the reaction UTP = 3',5'-cyclic UMP + diphosphate. Pycsar (pyrimidine cyclase system for antiphage resistance) provides immunity against bacteriophage. The pyrimidine cyclase (PycC) synthesizes cyclic nucleotides in response to infection; these serve as specific second messenger signals. The signals activate the adjacent effector, leading to bacterial cell death and abortive phage infection. A clade D Pycsar system. Its function is as follows. The pyrimidine cyclase gene of a two-gene Pycsar system, generates cyclic UMP (cUMP) from UTP as well as cGMP from GTP to a lesser extent, has little to no activity on ATP or CTP. Expression of this and adjacent effector PtPycTM (AC A0A4Q9KQH5) probably confers resistance to bacteriophage. The genes are probably only expressed in response to bacteriophage infection. The sequence is that of Uridylate cyclase from Propioniciclava tarda.